A 252-amino-acid chain; its full sequence is PHD finger protein ALFIN-LIKE 7 (252 aa).

Residues 141–193 form a disordered region; it reads AKQSKDQSANHNSSRSKSSGGKPRHSESHTKASKMSPPPRKEDESGDEDEDDE. Residues 149–161 are compositionally biased toward low complexity; it reads ANHNSSRSKSSGG. Residue S176 is modified to Phosphoserine. Acidic residues predominate over residues 184 to 193; the sequence is ESGDEDEDDE. Residues 195–247 form a PHD-type zinc finger; the sequence is GAVCGACGDNYGGDEFWICCDACEKWFHGKCVKITPAKAEHIKHYKCPSCTTS.

The protein belongs to the Alfin family. In terms of assembly, interacts with H3K4me3 and to a lesser extent with H3K4me2. Ubiquitously expressed.

The protein resides in the nucleus. Its function is as follows. Histone-binding component that specifically recognizes H3 tails trimethylated on 'Lys-4' (H3K4me3), which mark transcription start sites of virtually all active genes. In Arabidopsis thaliana (Mouse-ear cress), this protein is PHD finger protein ALFIN-LIKE 7 (AL7).